The sequence spans 621 residues: GPI-anchor transamidase component GPAA1 (621 aa).

Residues 1 to 19 lie on the Cytoplasmic side of the membrane; it reads MGLLSDPVRRRALARIVLR. A helical transmembrane segment spans residues 20 to 41; that stretch reads LNTPLCVLSYVAGIAWFLALAF. The Lumenal segment spans residues 42-370; it reads PPLTQRTYMS…LLPALSRFVS (329 aa). A 2-acyl-6-[6-phosphoethanolamine-alpha-D-mannosyl-(1-&gt;2)-6-phosphoethanolamine-alpha-D-mannosyl-(1-&gt;6)-2-phosphoethanolamine-alpha-D-mannosyl-(1-&gt;4)-alpha-D-glucosaminyl]-1-(1-radyl,2-acyl-sn-glycero-3-phospho)-1D-myo-inositol-binding residues include Tyr-49 and Ser-51. N-linked (GlcNAc...) asparagine glycosylation occurs at Asn-203. An intrachain disulfide couples Cys-259 to Cys-266. A 2-acyl-6-[6-phosphoethanolamine-alpha-D-mannosyl-(1-&gt;2)-6-phosphoethanolamine-alpha-D-mannosyl-(1-&gt;6)-2-phosphoethanolamine-alpha-D-mannosyl-(1-&gt;4)-alpha-D-glucosaminyl]-1-(1-radyl,2-acyl-sn-glycero-3-phospho)-1D-myo-inositol contacts are provided by His-354, Gln-355, and Ser-356. Gln-355 contributes to the Mg(2+) binding site. The chain crosses the membrane as a helical span at residues 371–393; that stretch reads IGLYMPATGFLLLVLGLKALELW. The Cytoplasmic portion of the chain corresponds to 394-425; that stretch reads MQLHQAGVNPEEAGKAPSPGTPLLPTQGVGLA. Residues 426 to 450 traverse the membrane as a helical segment; that stretch reads SLTAPLLISQAMGLALYFLPVLGQH. At 451-462 the chain is on the lumenal side; that stretch reads LATQHFPVAEAE. The chain crosses the membrane as a helical span at residues 463-483; sequence AVVLTLLAIYVAGLALPHNTH. Residues 484 to 495 lie on the Cytoplasmic side of the membrane; it reads RVVNSQVPDRGW. The next 2 helical transmembrane spans lie at 496 to 519 and 520 to 536; these read MALK…LNFS and LGFL…ALAK. The Cytoplasmic segment spans residues 537–540; it reads PHGP. The chain crosses the membrane as a helical span at residues 541–563; it reads RTLYAALLVVTSPAVTLFGSLFL. Over 564 to 597 the chain is Lumenal; the sequence is WRELLEVPLSLAEGWQLFLTALAQGVLEHYTYGA. Residues 598 to 619 traverse the membrane as a helical segment; the sequence is LLFPILALGLYPCWLLFWNVLF. The Cytoplasmic portion of the chain corresponds to 620-621; that stretch reads WK.

As to quaternary structure, heteropentamer. Part of the GPI-anchor transamidase complex, consisting of PIGK, PIGT, PIGS, PIGU and GAA1. Interacts with PIGK. In terms of tissue distribution, ubiquitously expressed in fetal and adult tissues. Expressed at higher levels in fetal tissues than adult tissues. In embryos abundant in the choroid plexus, skeletal muscle,.

It is found in the endoplasmic reticulum membrane. The protein operates within glycolipid biosynthesis; glycosylphosphatidylinositol-anchor biosynthesis. Its function is as follows. Component of the glycosylphosphatidylinositol-anchor (GPI-anchor) transamidase (GPI-T) complex that catalyzes the formation of the linkage between a proprotein and a GPI-anchor and participates in GPI anchored protein biosynthesis. Binds GPI-anchor. The chain is GPI-anchor transamidase component GPAA1 from Mus musculus (Mouse).